Here is a 273-residue protein sequence, read N- to C-terminus: Peptide deformylase 1B, chloroplastic/mitochondrial (273 aa).

A chloroplast and mitochondrion-targeting transit peptide spans 1–56; that stretch reads MAVCNCFLQAPPLSRILLPVLSRRATTLSAGYGRLKSTVTFCSTVNRTSPLTSSVR. Fe cation-binding residues include cysteine 171 and histidine 213. Glutamate 214 is a catalytic residue. Residue histidine 217 participates in Fe cation binding. The span at 246–261 shows a compositional bias: basic and acidic residues; it reads YEEKTGLPSPERVEAR. A disordered region spans residues 246 to 273; it reads YEEKTGLPSPERVEARQKRKAGVGFGKR. The span at 262–273 shows a compositional bias: basic residues; it reads QKRKAGVGFGKR.

The protein belongs to the polypeptide deformylase family. In terms of assembly, homodimer. It depends on Fe(2+) as a cofactor. In terms of tissue distribution, expressed in leaves and flowers.

It localises to the plastid. It is found in the chloroplast stroma. The protein resides in the mitochondrion. It carries out the reaction N-terminal N-formyl-L-methionyl-[peptide] + H2O = N-terminal L-methionyl-[peptide] + formate. With respect to regulation, inhibited by actinonin. In terms of biological role, removes the formyl group from the N-terminal Met of newly synthesized proteins. Has a preferred substrate specificity towards the photosystem II (PS II) D1 polypeptide. In Arabidopsis thaliana (Mouse-ear cress), this protein is Peptide deformylase 1B, chloroplastic/mitochondrial (PDF1B).